The primary structure comprises 569 residues: Ribosome-inactivating protein SNAI' (569 aa).

The first 28 residues, Met-1–Ser-28, serve as a signal peptide directing secretion. Asn-40 carries an N-linked (GlcNAc...) asparagine glycan. Glu-201 is a catalytic residue. Intrachain disulfides connect Cys-286–Cys-311, Cys-328–Cys-347, and Cys-369–Cys-381. Ricin B-type lectin domains follow at residues Glu-315–Gly-435 and Val-437–Ser-565. A 1-alpha repeat occupies Asp-325–Ser-365. The stretch at Leu-366–Asn-401 is one 1-beta repeat. The stretch at Ser-404–Asn-436 is one 1-gamma repeat. The 2-alpha repeat unit spans residues Glu-448 to Val-488. Disulfide bonds link Cys-451–Cys-466 and Cys-495–Cys-512. Residues Arg-492–Asn-530 form a 2-beta repeat. A 2-gamma repeat occupies Ser-533–Thr-566.

This sequence in the N-terminal section; belongs to the ribosome-inactivating protein family. Type 2 RIP subfamily. Disulfide-linked dimer of A and B chains.

It catalyses the reaction Endohydrolysis of the N-glycosidic bond at one specific adenosine on the 28S rRNA.. Its function is as follows. The A chain is responsible for inhibiting protein synthesis through the catalytic inactivation of 60S ribosomal subunits by removing adenine from position 4,324 of 28S rRNA. The B chain binds to cell receptors and probably facilitates the entry into the cell of the A chain; B chains are also responsible for cell agglutination (lectin activity). Agglutination is inhibited by Neu5Ac(alpha2,6)lactose, and N-linked glycoproteins such as fetuin and orosomucoid. The protein is Ribosome-inactivating protein SNAI' of Sambucus nigra (European elder).